We begin with the raw amino-acid sequence, 879 residues long: Metabotropic glutamate receptor 3 (879 aa).

The first 22 residues, 1-22 (MKMLTRLQILMLALFSKGFLLS), serve as a signal peptide directing secretion. Residues 23-576 (LGDHNFMRRE…EDYIKWEDAW (554 aa)) lie on the Extracellular side of the membrane. Cysteine 57 and cysteine 99 are disulfide-bonded. L-glutamate-binding positions include arginine 68, serine 151, and 172–174 (AST). A glycan (N-linked (GlcNAc...) asparagine) is linked at asparagine 209. Tyrosine 222 serves as a coordination point for L-glutamate. Cystine bridges form between cysteine 240-cysteine 527, cysteine 361-cysteine 373, cysteine 412-cysteine 419, cysteine 509-cysteine 528, cysteine 513-cysteine 531, cysteine 534-cysteine 546, and cysteine 549-cysteine 562. Residue asparagine 292 is glycosylated (N-linked (GlcNAc...) asparagine). Aspartate 301 contacts L-glutamate. Lysine 389 contacts L-glutamate. Asparagine 414 and asparagine 439 each carry an N-linked (GlcNAc...) asparagine glycan. The chain crosses the membrane as a helical span at residues 577-599 (AIGPVTIACLGFLCTCIVITVFI). Over 600-613 (KHNNTPLVKASGRE) the chain is Cytoplasmic. Residues 614–634 (LCYILLFGVSLSYCMTFFFIA) traverse the membrane as a helical segment. The Extracellular segment spans residues 635–645 (KPSPVICALRR). Residues 646-664 (LGLGTSFAICYSALLTKTN) form a helical membrane-spanning segment. The Cytoplasmic portion of the chain corresponds to 665-688 (CIARIFDGVKNGAQRPKFISPSSQ). The chain crosses the membrane as a helical span at residues 689-709 (VFICLGLILVQIVMVSVWLIL). Over 710–734 (ETPGTRRYTLPEKRETVILKCNVKD) the chain is Extracellular. The chain crosses the membrane as a helical span at residues 735 to 756 (SSMLISLTYDVVLVILCTVYAF). Residues 757–769 (KTRKCPENFNEAK) are Cytoplasmic-facing. Residues 770–792 (FIGFTMYTTCIIWLAFLPIFYVT) traverse the membrane as a helical segment. At 793–802 (SSDYRVQTTT) the chain is on the extracellular side. Residues 803-828 (MCISVSLSGFVVLGCLFAPKVHIVLF) form a helical membrane-spanning segment. Topologically, residues 829 to 879 (QPQKNVVTHRLHLNRFSVSGTATTYSQSSASTYVPTVCNGREVLDSTTSSL) are cytoplasmic.

It belongs to the G-protein coupled receptor 3 family. As to quaternary structure, interacts with TAMALIN. As to expression, is widely distributed in the CNS. Predominant expression is seen in the neuronal cells of the cerebral cortex, dentate gyrus, and glial cells throughout brain regions.

The protein resides in the cell membrane. G-protein coupled receptor for glutamate. Ligand binding causes a conformation change that triggers signaling via guanine nucleotide-binding proteins (G proteins) and modulates the activity of down-stream effectors. Signaling inhibits adenylate cyclase activity. This Rattus norvegicus (Rat) protein is Metabotropic glutamate receptor 3 (Grm3).